Reading from the N-terminus, the 364-residue chain is Aminomethyltransferase (364 aa).

It belongs to the GcvT family. The glycine cleavage system is composed of four proteins: P, T, L and H.

It catalyses the reaction N(6)-[(R)-S(8)-aminomethyldihydrolipoyl]-L-lysyl-[protein] + (6S)-5,6,7,8-tetrahydrofolate = N(6)-[(R)-dihydrolipoyl]-L-lysyl-[protein] + (6R)-5,10-methylene-5,6,7,8-tetrahydrofolate + NH4(+). The glycine cleavage system catalyzes the degradation of glycine. In Escherichia coli O6:H1 (strain CFT073 / ATCC 700928 / UPEC), this protein is Aminomethyltransferase.